A 155-amino-acid chain; its full sequence is 6,7-dimethyl-8-ribityllumazine synthase (155 aa).

Residues Phe22, 57–59, and 81–83 contribute to the 5-amino-6-(D-ribitylamino)uracil site; these read AVE and TVI. Position 86-87 (86-87) interacts with (2S)-2-hydroxy-3-oxobutyl phosphate; that stretch reads GT. Catalysis depends on His89, which acts as the Proton donor. 5-amino-6-(D-ribitylamino)uracil is bound at residue Phe114. (2S)-2-hydroxy-3-oxobutyl phosphate is bound at residue Arg128.

Belongs to the DMRL synthase family. In terms of assembly, forms an icosahedral capsid composed of 60 subunits, arranged as a dodecamer of pentamers.

It carries out the reaction (2S)-2-hydroxy-3-oxobutyl phosphate + 5-amino-6-(D-ribitylamino)uracil = 6,7-dimethyl-8-(1-D-ribityl)lumazine + phosphate + 2 H2O + H(+). It participates in cofactor biosynthesis; riboflavin biosynthesis; riboflavin from 2-hydroxy-3-oxobutyl phosphate and 5-amino-6-(D-ribitylamino)uracil: step 1/2. In terms of biological role, catalyzes the formation of 6,7-dimethyl-8-ribityllumazine by condensation of 5-amino-6-(D-ribitylamino)uracil with 3,4-dihydroxy-2-butanone 4-phosphate. This is the penultimate step in the biosynthesis of riboflavin. The polypeptide is 6,7-dimethyl-8-ribityllumazine synthase (Psychromonas ingrahamii (strain DSM 17664 / CCUG 51855 / 37)).